The sequence spans 156 residues: Peptide deformylase (156 aa).

Fe cation is bound by residues cysteine 90 and histidine 132. Glutamate 133 is an active-site residue. Residue histidine 136 coordinates Fe cation.

The protein belongs to the polypeptide deformylase family. The cofactor is Fe(2+).

It carries out the reaction N-terminal N-formyl-L-methionyl-[peptide] + H2O = N-terminal L-methionyl-[peptide] + formate. Removes the formyl group from the N-terminal Met of newly synthesized proteins. Requires at least a dipeptide for an efficient rate of reaction. N-terminal L-methionine is a prerequisite for activity but the enzyme has broad specificity at other positions. The chain is Peptide deformylase from Natranaerobius thermophilus (strain ATCC BAA-1301 / DSM 18059 / JW/NM-WN-LF).